Reading from the N-terminus, the 298-residue chain is Phosphatidylserine decarboxylase proenzyme (298 aa).

Active-site charge relay system; for autoendoproteolytic cleavage activity residues include Asp113, His169, and Ser256. Ser256 (schiff-base intermediate with substrate; via pyruvic acid; for decarboxylase activity) is an active-site residue. Ser256 is modified (pyruvic acid (Ser); by autocatalysis).

It belongs to the phosphatidylserine decarboxylase family. PSD-B subfamily. Prokaryotic type II sub-subfamily. As to quaternary structure, heterodimer of a large membrane-associated beta subunit and a small pyruvoyl-containing alpha subunit. Pyruvate is required as a cofactor. Is synthesized initially as an inactive proenzyme. Formation of the active enzyme involves a self-maturation process in which the active site pyruvoyl group is generated from an internal serine residue via an autocatalytic post-translational modification. Two non-identical subunits are generated from the proenzyme in this reaction, and the pyruvate is formed at the N-terminus of the alpha chain, which is derived from the carboxyl end of the proenzyme. The autoendoproteolytic cleavage occurs by a canonical serine protease mechanism, in which the side chain hydroxyl group of the serine supplies its oxygen atom to form the C-terminus of the beta chain, while the remainder of the serine residue undergoes an oxidative deamination to produce ammonia and the pyruvoyl prosthetic group on the alpha chain. During this reaction, the Ser that is part of the protease active site of the proenzyme becomes the pyruvoyl prosthetic group, which constitutes an essential element of the active site of the mature decarboxylase.

The protein localises to the cell membrane. It catalyses the reaction a 1,2-diacyl-sn-glycero-3-phospho-L-serine + H(+) = a 1,2-diacyl-sn-glycero-3-phosphoethanolamine + CO2. It functions in the pathway phospholipid metabolism; phosphatidylethanolamine biosynthesis; phosphatidylethanolamine from CDP-diacylglycerol: step 2/2. Its function is as follows. Catalyzes the formation of phosphatidylethanolamine (PtdEtn) from phosphatidylserine (PtdSer). The sequence is that of Phosphatidylserine decarboxylase proenzyme from Desulfitobacterium hafniense (strain DSM 10664 / DCB-2).